An 875-amino-acid chain; its full sequence is Phosphoenolpyruvate carboxylase (875 aa).

Catalysis depends on residues His137 and Lys542.

This sequence belongs to the PEPCase type 1 family. Requires Mg(2+) as cofactor.

It carries out the reaction oxaloacetate + phosphate = phosphoenolpyruvate + hydrogencarbonate. In terms of biological role, forms oxaloacetate, a four-carbon dicarboxylic acid source for the tricarboxylic acid cycle. This chain is Phosphoenolpyruvate carboxylase, found in Pseudomonas putida (strain ATCC 700007 / DSM 6899 / JCM 31910 / BCRC 17059 / LMG 24140 / F1).